The sequence spans 885 residues: MQKMHNSEYLKELSVNNISYKIYDINKAASDIDLPLKKLPYSLRVLFENVLRTGSKQNLMVFKEWLKNKKSDAEIDFMPARVLMQDFTGVPAIVDLAAMRDAMKKIGGDPLKINPLIPVDLVIDHSVSVDSYASGSSFDKNVAMEMRRNIERYQFLKWGQQAFNNFKVVPPGTGICHQVNLEYLAKVVWHSNGVAYPDSLVGTDSHTTMVNGLSVLGWGVGGIEAEAAMLGQPLTMILPEVIGVKLTGKLTGTATATDLVLKITEMLRKKKVVGKFVEFYGEGLKAMTIADRATISNMAPEYGATCGFFPIDQETIKYLELTGRDKEQIKLVEEYAKAQDLWCNFDDAAEYTDILELDLSEVTSSLAGPRRPQDRVNLGDVSSGFKKELSTFSSNNISIDTKHAVANQNYEIGNGDVVIAAITSCTNTSNPSVMIGAALLAKKAIEQGLKVKPWVKTSLAPGSKVVTEYLKSSGLNQYLDQLGFNLVGYGCTTCIGNSGPLNPEIEETINKNGLVVASVLSGNRNFEGRINPLTKASYLASPILVVAYALSGSLNIDLTNHPLGKNDKGRDVYLKDIWPSKEEIDKVIANSINSSMFVEKYSDIFSGTKEWQSLEVTSSSNYAWDKSSTYINNPPYFENIGSKNSIKDIKSARILAIFGDSITTDHISPAGSISKTSPAAKYLTDHQISPIDFNSYGSRRGNHEVMMRGTFANIRIKNEMCKGVEGGFTINQLKNMQQTIYDAAMDYKANGVSAVIFAGKEYGSGSSRDWAAKGPQLLGVKAVIAESFERIHRSNLVGMGVLPLIFTNNMTRFDLKLDGSESIDIIGLNEHIKPYNSVKCIIKKQNGEMQTIDLILQIFTDNEINYIKHGSIMHFVVENLKNNHI.

C425, C491, and C494 together coordinate [4Fe-4S] cluster.

It belongs to the aconitase/IPM isomerase family. Monomer. [4Fe-4S] cluster serves as cofactor.

It catalyses the reaction citrate = D-threo-isocitrate. The enzyme catalyses (2S,3R)-3-hydroxybutane-1,2,3-tricarboxylate = 2-methyl-cis-aconitate + H2O. The protein operates within carbohydrate metabolism; tricarboxylic acid cycle; isocitrate from oxaloacetate: step 2/2. It participates in organic acid metabolism; propanoate degradation. Involved in the catabolism of short chain fatty acids (SCFA) via the tricarboxylic acid (TCA)(acetyl degradation route) and probably the 2-methylcitrate cycle I (propionate degradation route). Catalyzes the reversible isomerization of citrate to isocitrate via cis-aconitate. Could catalyze the hydration of 2-methyl-cis-aconitate to yield (2R,3S)-2-methylisocitrate. The apo form of AcnA functions as a RNA-binding regulatory protein. The polypeptide is Aconitate hydratase A (acnA) (Rickettsia bellii (strain RML369-C)).